The chain runs to 138 residues: Large ribosomal subunit protein uL16 (138 aa).

Over residues 1 to 17 the composition is skewed to basic residues; the sequence is MLIPRKVKHRKQHHPRQ. The disordered stretch occupies residues 1 to 23; that stretch reads MLIPRKVKHRKQHHPRQRGIASG.

This sequence belongs to the universal ribosomal protein uL16 family. Part of the 50S ribosomal subunit.

Binds 23S rRNA and is also seen to make contacts with the A and possibly P site tRNAs. In Mycobacterium sp. (strain JLS), this protein is Large ribosomal subunit protein uL16.